A 344-amino-acid polypeptide reads, in one-letter code: Dihydroorotase (344 aa).

Zn(2+) contacts are provided by His14 and His16. Residues 16-18 and Asn42 each bind substrate; that span reads HLR. 3 residues coordinate Zn(2+): Lys100, His137, and His175. Lys100 carries the N6-carboxylysine modification. A substrate-binding site is contributed by His137. Leu220 contributes to the substrate binding site. Zn(2+) is bound at residue Asp248. The active site involves Asp248. Substrate-binding residues include His252 and Ala264.

Belongs to the metallo-dependent hydrolases superfamily. DHOase family. Class II DHOase subfamily. As to quaternary structure, homodimer. Zn(2+) serves as cofactor.

It carries out the reaction (S)-dihydroorotate + H2O = N-carbamoyl-L-aspartate + H(+). It participates in pyrimidine metabolism; UMP biosynthesis via de novo pathway; (S)-dihydroorotate from bicarbonate: step 3/3. In terms of biological role, catalyzes the reversible cyclization of carbamoyl aspartate to dihydroorotate. The polypeptide is Dihydroorotase (Cupriavidus metallidurans (strain ATCC 43123 / DSM 2839 / NBRC 102507 / CH34) (Ralstonia metallidurans)).